A 323-amino-acid polypeptide reads, in one-letter code: Dof zinc finger protein DOF3.6 (323 aa).

The Dof-type zinc finger occupies 76–130; the sequence is LNCPRCDSTNTKFCYFNNYSLTQPRHFCKTCRRYWTRGGSLRNVPVGGGFRRNKR. Positions 78, 81, 103, and 106 each coordinate Zn(2+). 2 disordered regions span residues 121–160 and 304–323; these read VGGG…SYSN and GGNS…HLSF. Residues 126-135 are compositionally biased toward basic residues; that stretch reads RRNKRSKSRS. The segment covering 136 to 159 has biased composition (low complexity); that stretch reads KSTVVVSTDNTTSTSSLTSRPSYS.

As to quaternary structure, interacts with OBF4. As to expression, predominantly expressed in roots.

It localises to the nucleus. Its function is as follows. Transcription factor that binds specifically to a 5'-AA[AG]G-3' consensus core sequence. Enhances the DNA binding of OBF transcription factors to OCS elements. This Arabidopsis thaliana (Mouse-ear cress) protein is Dof zinc finger protein DOF3.6 (DOF3.6).